The following is a 390-amino-acid chain: Putative 8-amino-7-oxononanoate synthase (390 aa).

Arginine 19 is a substrate binding site. Pyridoxal 5'-phosphate is bound at residue 105 to 106; sequence GY. Histidine 130 lines the substrate pocket. Residues serine 177, 202–205, and 234–237 each bind pyridoxal 5'-phosphate; these read DEAH and TFSK. Lysine 237 is subject to N6-(pyridoxal phosphate)lysine. Threonine 351 lines the substrate pocket.

The protein belongs to the class-II pyridoxal-phosphate-dependent aminotransferase family. BioF subfamily. Homodimer. Pyridoxal 5'-phosphate is required as a cofactor.

The catalysed reaction is 6-carboxyhexanoyl-[ACP] + L-alanine + H(+) = (8S)-8-amino-7-oxononanoate + holo-[ACP] + CO2. Its pathway is cofactor biosynthesis; biotin biosynthesis. Catalyzes the decarboxylative condensation of pimeloyl-[acyl-carrier protein] and L-alanine to produce 8-amino-7-oxononanoate (AON), [acyl-carrier protein], and carbon dioxide. The chain is Putative 8-amino-7-oxononanoate synthase (bioF) from Geobacillus kaustophilus (strain HTA426).